Here is a 570-residue protein sequence, read N- to C-terminus: Periplasmic trehalase (570 aa).

Residues 1 to 34 form the signal peptide; the sequence is MIPPEIRRSVLLQKAIKLALAGTLLTFASFSATA. Substrate-binding positions include R159, 166 to 167, N203, 212 to 214, 284 to 286, and G317; these read WD, RSQ, and RPE. Catalysis depends on proton donor/acceptor residues D319 and E503. E518 is a binding site for substrate. The tract at residues 544-570 is disordered; the sequence is KPCDSVPSTRPASLSATPTKTPSAATQ. Residues 554–570 show a composition bias toward low complexity; the sequence is PASLSATPTKTPSAATQ.

Belongs to the glycosyl hydrolase 37 family. As to quaternary structure, monomer.

It localises to the periplasm. It catalyses the reaction alpha,alpha-trehalose + H2O = alpha-D-glucose + beta-D-glucose. Functionally, provides the cells with the ability to utilize trehalose at high osmolarity by splitting it into glucose molecules that can subsequently be taken up by the phosphotransferase-mediated uptake system. This chain is Periplasmic trehalase, found in Salmonella newport (strain SL254).